A 366-amino-acid polypeptide reads, in one-letter code: Inhibin alpha chain (366 aa).

An N-terminal signal peptide occupies residues 1-20; sequence MVSQRSLLLLLLLTLRDVDS. Positions 21-63 are excised as a propeptide; it reads CQGPELVRELVLAKVKALFLDALGPPAMDGEGGDPGIRRLPRR. A propeptide spans 64-233 (inhibin alpha N-terminal region); it reads HAVGGFMHRT…APSAGERARR (170 aa). N-linked (GlcNAc...) asparagine glycosylation is found at Asn-147 and Asn-269. Cystine bridges form between Cys-263-Cys-328, Cys-292-Cys-363, and Cys-296-Cys-365.

It belongs to the TGF-beta family. As to quaternary structure, dimeric, linked by one or more disulfide bonds. Activin B is a dimer of alpha and beta-B. Inhibin A is a dimer of alpha and beta-A. Inhibin B is a dimer of alpha and beta-B. Interacts with TGFBR3L; this interaction regulates female fertility. Post-translationally, proteolytic processing yields a number of bioactive forms, consisting either solely of the mature alpha chain, of the most N-terminal propeptide linked through a disulfide bond to the mature alpha chain, or of the entire proprotein.

The protein resides in the secreted. Its function is as follows. Inhibins and activins inhibit and activate, respectively, the secretion of follitropin by the pituitary gland. Inhibins/activins are involved in regulating a number of diverse functions such as hypothalamic and pituitary hormone secretion, gonadal hormone secretion, germ cell development and maturation, erythroid differentiation, insulin secretion, nerve cell survival, embryonic axial development or bone growth, depending on their subunit composition. Inhibins appear to oppose the functions of activins. In terms of biological role, inhibin A is a dimer of alpha/INHA and beta-A/INHBA that functions as a feedback regulator in the hypothalamic-pituitary-gonadal (HPG) axis. Inhibits the secretion of FSH from the anterior pituitary gland by acting on pituitary gonadotrope cells. Antagonizes activin A by binding to the proteoglycan, betaglycan, and forming a stable complex with and, thereby, sequestering type II activin receptors while excluding type I receptor. Functionally, inhibin B is a dimer of alpha and beta-B that plays a crucial role in the regulation of the reproductive system by inhibiting the secretion of follicle-stimulating hormone (FSH) from the anterior pituitary gland. Thereby, maintains reproductive homeostasis in both males and females. Acts as a more potent suppressor of FSH release than inhibin A. Functions as competitive receptor antagonist binding activin type II receptors with high affinity in the presence of the TGF-beta type III coreceptor/TGFBR3L. The polypeptide is Inhibin alpha chain (Inha) (Mus musculus (Mouse)).